The sequence spans 147 residues: UPF0735 ACT domain-containing protein Cthe_1377 (147 aa).

The ACT domain occupies 71–146; sequence TLFFTVEDYA…GVKRQEILAR (76 aa).

It belongs to the UPF0735 family.

In Acetivibrio thermocellus (strain ATCC 27405 / DSM 1237 / JCM 9322 / NBRC 103400 / NCIMB 10682 / NRRL B-4536 / VPI 7372) (Clostridium thermocellum), this protein is UPF0735 ACT domain-containing protein Cthe_1377.